We begin with the raw amino-acid sequence, 221 residues long: Ribonuclease 3 (221 aa).

Positions 4–121 (LEQLEKKLGY…LWAAVYIDSG (118 aa)) constitute an RNase III domain. Glutamate 40 is a Mg(2+) binding site. Residue aspartate 44 is part of the active site. Mg(2+) contacts are provided by aspartate 107 and glutamate 110. Glutamate 110 is a catalytic residue. Residues 151 to 219 (DYKTILQEIT…AEELIKLLEE (69 aa)) form the DRBM domain.

This sequence belongs to the ribonuclease III family. As to quaternary structure, homodimer. Requires Mg(2+) as cofactor.

Its subcellular location is the cytoplasm. The enzyme catalyses Endonucleolytic cleavage to 5'-phosphomonoester.. Digests double-stranded RNA. Involved in the processing of primary rRNA transcript to yield the immediate precursors to the large and small rRNAs (23S and 16S). Also processes some mRNAs, and tRNAs when they are encoded in the rRNA operon. Probably processes pre-crRNA and tracrRNA of type II CRISPR loci if present in the organism. This chain is Ribonuclease 3 (rnc), found in Aquifex aeolicus (strain VF5).